The primary structure comprises 61 residues: Large ribosomal subunit protein uL29 (61 aa).

The protein belongs to the universal ribosomal protein uL29 family.

The polypeptide is Large ribosomal subunit protein uL29 (Campylobacter curvus (strain 525.92)).